Reading from the N-terminus, the 1061-residue chain is MKETSPIPQPKTFGPLGNLPLIDKDKPTLSLIKLAEEQGPIFQIHTPAGTTIVVSGHELVKEVCDEERFDKSIEGALEKVRAFSGDGLFTSWTHEPNWRKAHNILMPTFSQRAMKDYHEKMVDIAVQLIQKWARLNPNEAVDVPGDMTRLTLDTIGLCGFNYRFNSYYRETPHPFINSMVRALDEAMHQMQRLDVQDKLMVRTKRQFRYDIQTMFSLVDSIIAERRANGDQDEKDLLARMLNVEDPETGEKLDDENIRFQIITFLIAGHETTSGLLSFATYFLLKHPDKLKKAYEEVDRVLTDAAPTYKQVLELTYIRMILNESLRLWPTAPAFSLYPKEDTVIGGKFPITTNDRISVLIPQLHRDRDAWGKDAEEFRPERFEHQDQVPHHAYKPFGNGQRACIGMQFALHEATLVLGMILKYFTLIDHENYELDIKQTLTLKPGDFHISVQSRHQEAIHADVQAAEKAAPDEQKEKTEAKGASVIGLNNRPLLVLYGSDTGTAEGVARELADTASLHGVRTKTAPLNDRIGKLPKEGAVVIVTSSYNGKPPSNAGQFVQWLQEIKPGELEGVHYAVFGCGDHNWASTYQYVPRFIDEQLAEKGATRFSARGEGDVSGDFEGQLDEWKKSMWADAIKAFGLELNENADKERSTLSLQFVRGLGESPLARSYEASHASIAENRELQSADSDRSTRHIEIALPPDVEYQEGDHLGVLPKNSQTNVSRILHRFGLKGTDQVTLSASGRSAGHLPLGRPVSLHDLLSYSVEVQEAATRAQIRELASFTVCPPHRRELEELSAEGVYQEQILKKRISMLDLLEKYEACDMPFERFLELLRPLKPRYYSISSSPRVNPRQASITVGVVRGPAWSGRGEYRGVASNDLAERQAGDDVVMFIRTPESRFQLPKDPETPIIMVGPGTGVAPFRGFLQARDVLKREGKTLGEAHLYFGCRNDRDFIYRDELERFEKDGIVTVHTAFSRKEGMPKTYVQHLMADQADTLISILDRGGRLYVCGDGSKMAPDVEAALQKAYQAVHGTGEQEAQNWLRHLQDTGMYAKDVWAGI.

The interval 1 to 475 (MKETSPIPQP…AEKAAPDEQK (475 aa)) is cytochrome P450. A heme-binding site is contributed by cysteine 403. The tract at residues 476-1061 (EKTEAKGASV…MYAKDVWAGI (586 aa)) is NADPH--P450 reductase. The Flavodoxin-like domain occupies 493-632 (LLVLYGSDTG…QLDEWKKSMW (140 aa)). FMN contacts are provided by residues 499–504 (SDTGTA), 546–549 (SYNG), 580–582 (CGD), and 588–590 (TYQ). Residues 671 to 904 (YEASHASIAE…RTPESRFQLP (234 aa)) enclose the FAD-binding FR-type domain.

It in the N-terminal section; belongs to the cytochrome P450 family. It depends on FAD as a cofactor. FMN serves as cofactor. The cofactor is heme b.

It localises to the cytoplasm. It carries out the reaction an organic molecule + reduced [NADPH--hemoprotein reductase] + O2 = an alcohol + oxidized [NADPH--hemoprotein reductase] + H2O + H(+). The enzyme catalyses 2 oxidized [cytochrome P450] + NADPH = 2 reduced [cytochrome P450] + NADP(+) + H(+). In terms of biological role, functions as a fatty acid monooxygenase. Catalyzes hydroxylation of a range of long-chain fatty acids, with a preference for long-chain unsaturated and branched-chain fatty acids over saturated fatty acids. Hydroxylation of myristic acid occurs mainly at the omega-2 position. Also displays a NADPH-dependent reductase activity in the C-terminal domain, which allows electron transfer from NADPH to the heme iron of the cytochrome P450 N-terminal domain. Is also able to catalyze efficient oxidation of sodium dodecyl sulfate (SDS). The sequence is that of Bifunctional cytochrome P450/NADPH--P450 reductase 1 from Bacillus subtilis (strain 168).